Here is a 404-residue protein sequence, read N- to C-terminus: MTVKTPVYLDYAATTPVDKRVAEKMIPYLTETFGNPASNSHAFGWEAEEAVEKARADIAALINADPKEIVFTSGATESDNLAIKGAANFYKTKGKHLITVKTEHKAVLDTMRELERQGFEVTYLGVQENGLIDLEELKAAIRDDTILISVMWANNEIGVVQDIPAIGEICRERKIVFHVDAAQACGKVPVDVEAAKIDLLSMSAHKVYGPKGIGALYVRRKPRVRLEAQMHGGGHERGFRSGTLPTHQIVGMGEAFRIAKEELEQDMAHYRKLRDIFLKGIEGIEEVYINGDLEHRAPNNLNVSFNFVEGESLIMAVKELAVSSGSACTSASLEPSYVLRALGRNDELAHSSLRITFGRMTTEEEVQFAAELIKSKIGKLRELSPLWEMFKDGIDLNSIEWAAH.

Pyridoxal 5'-phosphate is bound by residues 75-76 (AT), Asn-155, Gln-183, and 203-205 (SAH). Position 206 is an N6-(pyridoxal phosphate)lysine (Lys-206). Thr-243 provides a ligand contact to pyridoxal 5'-phosphate. Cys-328 (cysteine persulfide intermediate) is an active-site residue. Cys-328 serves as a coordination point for [2Fe-2S] cluster.

Belongs to the class-V pyridoxal-phosphate-dependent aminotransferase family. NifS/IscS subfamily. In terms of assembly, homodimer. Forms a heterotetramer with IscU, interacts with other sulfur acceptors. Pyridoxal 5'-phosphate is required as a cofactor.

The protein localises to the cytoplasm. It carries out the reaction (sulfur carrier)-H + L-cysteine = (sulfur carrier)-SH + L-alanine. It participates in cofactor biosynthesis; iron-sulfur cluster biosynthesis. Its function is as follows. Master enzyme that delivers sulfur to a number of partners involved in Fe-S cluster assembly, tRNA modification or cofactor biosynthesis. Catalyzes the removal of elemental sulfur atoms from cysteine to produce alanine. Functions as a sulfur delivery protein for Fe-S cluster synthesis onto IscU, an Fe-S scaffold assembly protein, as well as other S acceptor proteins. In Neisseria meningitidis serogroup C / serotype 2a (strain ATCC 700532 / DSM 15464 / FAM18), this protein is Cysteine desulfurase IscS.